Here is a 332-residue protein sequence, read N- to C-terminus: DNA repair and recombination protein RadA (332 aa).

126-133 is an ATP binding site; sequence GEFGSGKT.

This sequence belongs to the eukaryotic RecA-like protein family.

In terms of biological role, involved in DNA repair and in homologous recombination. Binds and assemble on single-stranded DNA to form a nucleoprotein filament. Hydrolyzes ATP in a ssDNA-dependent manner and promotes DNA strand exchange between homologous DNA molecules. This chain is DNA repair and recombination protein RadA, found in Pyrobaculum calidifontis (strain DSM 21063 / JCM 11548 / VA1).